Consider the following 77-residue polypeptide: Conotoxin ArMSGL-0141 (77 aa).

The signal sequence occupies residues 1 to 18 (MSGLGILVLTLLLLVYMA). A propeptide spanning residues 19–44 (TSHQDAGEKQATQRDAINVRRRRSLT) is cleaved from the precursor. Intrachain disulfides connect Cys-51-Cys-63, Cys-55-Cys-71, and Cys-62-Cys-75. Phe-76 carries the post-translational modification Phenylalanine amide.

The protein belongs to the conotoxin O3 superfamily. Expressed by the venom duct.

The protein localises to the secreted. In Conus arenatus (Sand-dusted cone), this protein is Conotoxin ArMSGL-0141.